The primary structure comprises 74 residues: Sodium channel neurotoxin MeuNaTxalpha-11 (74 aa).

A signal peptide spans 1–7 (LMTGVES). The LCN-type CS-alpha/beta domain occupies 9-73 (RDAYIAKPHN…VPIRIPGKCH (65 aa)). Disulfide bonds link cysteine 19–cysteine 72, cysteine 23–cysteine 45, cysteine 31–cysteine 55, and cysteine 35–cysteine 57. A propeptide (removed by a carboxypeptidase) is located at residue arginine 74.

Belongs to the long (4 C-C) scorpion toxin superfamily. Sodium channel inhibitor family. Alpha subfamily. In terms of tissue distribution, expressed by the venom gland.

It localises to the secreted. Functionally, alpha toxins bind voltage-independently at site-3 of sodium channels (Nav) and inhibit the inactivation of the activated channels, thereby blocking neuronal transmission. The protein is Sodium channel neurotoxin MeuNaTxalpha-11 of Mesobuthus eupeus (Lesser Asian scorpion).